A 949-amino-acid polypeptide reads, in one-letter code: Valine--tRNA ligase (949 aa).

Positions 40–50 (PNVTGSLHMGH) match the 'HIGH' region motif. The 'KMSKS' region signature appears at 553-557 (KMSKS). Residue Lys556 coordinates ATP. Residues 877 to 949 (MAGLIDKEAE…QEQQDKIKAL (73 aa)) are a coiled coil.

Belongs to the class-I aminoacyl-tRNA synthetase family. ValS type 1 subfamily. As to quaternary structure, monomer.

Its subcellular location is the cytoplasm. The enzyme catalyses tRNA(Val) + L-valine + ATP = L-valyl-tRNA(Val) + AMP + diphosphate. In terms of biological role, catalyzes the attachment of valine to tRNA(Val). As ValRS can inadvertently accommodate and process structurally similar amino acids such as threonine, to avoid such errors, it has a 'posttransfer' editing activity that hydrolyzes mischarged Thr-tRNA(Val) in a tRNA-dependent manner. The chain is Valine--tRNA ligase from Idiomarina loihiensis (strain ATCC BAA-735 / DSM 15497 / L2-TR).